The chain runs to 697 residues: PAN2-PAN3 deadenylation complex subunit PAN3 (697 aa).

The segment at 7–36 (TAKDTLCKNILIYGYCKYENKGCAFSHNRQ) adopts a C3H1-type zinc-finger fold. The tract at residues 40–67 (QQQQATNTSNNSTSVITPNSANSTASSA) is disordered. 2 consecutive short sequence motifs (PABPC-interacting motif-2 (PAM-2)) follow at residues 69–89 (LSSK…VSNL) and 106–126 (FKPE…TQRP). Residues 106–240 (FKPENGVSEP…SAPTPGSETP (135 aa)) are disordered. A compositionally biased stretch (polar residues) spans 119–153 (DSPTTQRPFTSKRFNVSTPSFTPTNFDFANNSNAD). The segment covering 172-187 (QNQQQQQQQQQQQQKQ) has biased composition (low complexity). The segment covering 212 to 224 (GVSQSSPSTNPYF) has biased composition (polar residues). The tract at residues 308–576 (QSLSHSNLPE…DLNEFSQRLT (269 aa)) is pseudokinase domain. Residues arginine 361, 416–423 (DYYPNSIS), and 470–471 (SK) each bind ATP. Residues 577-615 (PKMFNIIDSLQNSSDFIEGQLTSELENARLFRLMTKLNY) adopt a coiled-coil conformation. The tract at residues 616 to 697 (LIHDNSNSEN…IDTKFRLMRE (82 aa)) is knob domain.

Belongs to the protein kinase superfamily. PAN3 family. Homodimer. Forms a heterotrimer with a catalytic subunit PAN2 to form the poly(A)-nuclease (PAN) deadenylation complex. Interacts (via PAM-2 motif) with poly(A)-binding protein PAB1 (via PABC domain), conferring substrate specificity of the enzyme complex.

Its subcellular location is the cytoplasm. Functionally, regulatory subunit of the poly(A)-nuclease (PAN) deadenylation complex, one of two cytoplasmic mRNA deadenylases involved in mRNA turnover. PAN specifically shortens poly(A) tails of RNA and the activity is stimulated by poly(A)-binding protein PAB1. PAN deadenylation is followed by rapid degradation of the shortened mRNA tails by the CCR4-NOT complex. Deadenylated mRNAs are then degraded by two alternative mechanisms, namely exosome-mediated 3'-5' exonucleolytic degradation, or deadenylation-dependent mRNA decaping and subsequent 5'-3' exonucleolytic degradation by XRN1. May also be involved in post-transcriptional maturation of mRNA poly(A) tails. PAN3 acts as a positive regulator for PAN activity, recruiting the catalytic subunit PAN2 to mRNA via its interaction with RNA and with PAB1. This is PAN2-PAN3 deadenylation complex subunit PAN3 from Candida albicans (strain SC5314 / ATCC MYA-2876) (Yeast).